The sequence spans 274 residues: D-aminoacyl-tRNA deacylase (274 aa).

This sequence belongs to the DtdA deacylase family. As to quaternary structure, monomer. Zn(2+) serves as cofactor.

It carries out the reaction a D-aminoacyl-tRNA + H2O = a tRNA + a D-alpha-amino acid + H(+). The enzyme catalyses glycyl-tRNA(Ala) + H2O = tRNA(Ala) + glycine + H(+). D-aminoacyl-tRNA deacylase with broad substrate specificity. By recycling D-aminoacyl-tRNA to D-amino acids and free tRNA molecules, this enzyme counteracts the toxicity associated with the formation of D-aminoacyl-tRNA entities in vivo. This Pyrococcus horikoshii (strain ATCC 700860 / DSM 12428 / JCM 9974 / NBRC 100139 / OT-3) protein is D-aminoacyl-tRNA deacylase.